The following is a 70-amino-acid chain: Large ribosomal subunit protein eL38 (70 aa).

The protein belongs to the eukaryotic ribosomal protein eL38 family.

The sequence is that of Large ribosomal subunit protein eL38 (rpl-38) from Caenorhabditis elegans.